A 508-amino-acid chain; its full sequence is ATP synthase subunit alpha, mitochondrial (508 aa).

Residue 171-178 participates in ATP binding; that stretch reads GDRQTGKT.

Belongs to the ATPase alpha/beta chains family. As to quaternary structure, F-type ATPases have 2 components, CF(1) - the catalytic core - and CF(0) - the membrane proton channel. CF(1) has five subunits: alpha(3), beta(3), gamma(1), delta(1), epsilon(1). CF(0) has three main subunits: a, b and c.

The protein localises to the mitochondrion. It is found in the mitochondrion inner membrane. In terms of biological role, mitochondrial membrane ATP synthase (F(1)F(0) ATP synthase or Complex V) produces ATP from ADP in the presence of a proton gradient across the membrane which is generated by electron transport complexes of the respiratory chain. F-type ATPases consist of two structural domains, F(1) - containing the extramembraneous catalytic core, and F(0) - containing the membrane proton channel, linked together by a central stalk and a peripheral stalk. During catalysis, ATP synthesis in the catalytic domain of F(1) is coupled via a rotary mechanism of the central stalk subunits to proton translocation. Subunits alpha and beta form the catalytic core in F(1). Rotation of the central stalk against the surrounding alpha(3)beta(3) subunits leads to hydrolysis of ATP in three separate catalytic sites on the beta subunits. Subunit alpha does not bear the catalytic high-affinity ATP-binding sites. The polypeptide is ATP synthase subunit alpha, mitochondrial (ATPA) (Phaseolus vulgaris (Kidney bean)).